Reading from the N-terminus, the 587-residue chain is Protein SIX6OS1 (587 aa).

A disordered region spans residues 356–378 (TPQKQSNSNQWSEKGDKDAEYGD). A compositionally biased stretch (polar residues) spans 357–367 (PQKQSNSNQWS). A compositionally biased stretch (basic and acidic residues) spans 368–378 (EKGDKDAEYGD). Position 439 is a phosphoserine (Ser439). Positions 568–587 (SSSLKGFSSSSQNTTQFTFF) are disordered.

In terms of assembly, interacts with SYCE1. Interacts with proteasome subunit PSMA8; to participate in meiosis progression during spermatogenesis. Highest expression in retina, skeletal muscle, testis and colon.

It localises to the chromosome. Its function is as follows. Meiotic protein that localizes to the central element of the synaptonemal complex and is required for chromosome synapsis during meiotic recombination. Required for the appropriate processing of intermediate recombination nodules before crossover formation. The chain is Protein SIX6OS1 from Homo sapiens (Human).